Consider the following 578-residue polypeptide: Probable arginine--tRNA ligase, mitochondrial (578 aa).

A mitochondrion-targeting transit peptide spans 1-16 (MACGFRRSIACQLSRV). L-arginine is bound by residues 133–135 (SPN), His-144, Tyr-322, Asp-326, and Gln-350. Positions 133 to 144 (SPNIAKKFHVGH) match the 'HIGH' region motif. N6-acetyllysine is present on Lys-568.

The protein belongs to the class-I aminoacyl-tRNA synthetase family.

The protein resides in the mitochondrion membrane. The catalysed reaction is tRNA(Arg) + L-arginine + ATP = L-arginyl-tRNA(Arg) + AMP + diphosphate. Its function is as follows. Catalyzes the attachment of arginine to tRNA(Arg) in a two-step reaction: arginine is first activated by ATP to form Arg-AMP and then transferred to the acceptor end of tRNA(Arg). This is Probable arginine--tRNA ligase, mitochondrial (Rars2) from Mus musculus (Mouse).